Here is a 530-residue protein sequence, read N- to C-terminus: Anthranilate synthase component 1, pyocyanine specific (530 aa).

331–332 (GT) contributes to the substrate binding site. Position 364 (Glu364) interacts with Mg(2+). Residues Tyr452, Arg472, 486–488 (GAG), and Gly488 contribute to the substrate site. Glu501 contacts Mg(2+).

Belongs to the anthranilate synthase component I family. As to quaternary structure, heterotetramer consisting of two non-identical subunits: a beta subunit (PhnB) and a large alpha subunit (PhnA). Mg(2+) serves as cofactor.

The enzyme catalyses chorismate + L-glutamine = anthranilate + pyruvate + L-glutamate + H(+). Its pathway is secondary metabolite biosynthesis; pyocyanine biosynthesis. Functionally, part of a heterotetrameric complex that catalyzes the two-step biosynthesis of anthranilate, a precursor for Pseudomonas quinolone signal (2-heptyl-3-hydroxy-4-quinolone; PQS) production which is required to induce the genes for the biosynthesis of the virulence factor pyocyanine (PCN), a characteristic blue-green phenazine pigment produced by P.aeruginosa. In the first step, the glutamine-binding beta subunit (PhnB) of anthranilate synthase (AS) provides the glutamine amidotransferase activity which generates ammonia as a substrate that, along with chorismate, is used in the second step, catalyzed by the large alpha subunit of AS (PhnA) to produce anthranilate. The protein is Anthranilate synthase component 1, pyocyanine specific of Pseudomonas aeruginosa (strain ATCC 15692 / DSM 22644 / CIP 104116 / JCM 14847 / LMG 12228 / 1C / PRS 101 / PAO1).